Reading from the N-terminus, the 893-residue chain is Alanine--tRNA ligase (893 aa).

Zn(2+) contacts are provided by H575, H579, C677, and H681.

Belongs to the class-II aminoacyl-tRNA synthetase family. Zn(2+) serves as cofactor.

The protein resides in the cytoplasm. The enzyme catalyses tRNA(Ala) + L-alanine + ATP = L-alanyl-tRNA(Ala) + AMP + diphosphate. Functionally, catalyzes the attachment of alanine to tRNA(Ala) in a two-step reaction: alanine is first activated by ATP to form Ala-AMP and then transferred to the acceptor end of tRNA(Ala). Also edits incorrectly charged Ser-tRNA(Ala) and Gly-tRNA(Ala) via its editing domain. The polypeptide is Alanine--tRNA ligase (Synechococcus sp. (strain CC9311)).